The primary structure comprises 326 residues: Beta-ketoacyl-[acyl-carrier-protein] synthase III (326 aa).

Catalysis depends on residues Cys-120 and His-253. Residues 254 to 258 (QANIR) are ACP-binding. Asn-283 is an active-site residue.

It belongs to the thiolase-like superfamily. FabH family. Homodimer.

The protein localises to the cytoplasm. The catalysed reaction is malonyl-[ACP] + acetyl-CoA + H(+) = 3-oxobutanoyl-[ACP] + CO2 + CoA. The protein operates within lipid metabolism; fatty acid biosynthesis. In terms of biological role, catalyzes the condensation reaction of fatty acid synthesis by the addition to an acyl acceptor of two carbons from malonyl-ACP. Catalyzes the first condensation reaction which initiates fatty acid synthesis and may therefore play a role in governing the total rate of fatty acid production. Possesses both acetoacetyl-ACP synthase and acetyl transacylase activities. Its substrate specificity determines the biosynthesis of branched-chain and/or straight-chain of fatty acids. The chain is Beta-ketoacyl-[acyl-carrier-protein] synthase III from Cupriavidus necator (strain ATCC 17699 / DSM 428 / KCTC 22496 / NCIMB 10442 / H16 / Stanier 337) (Ralstonia eutropha).